A 454-amino-acid chain; its full sequence is MKISSFRKGRWLGALALFAVVCWSMADAAVDRIVAVVDDGVILESELVRKVDEIKRSLRASRASLPPDSVLVRQVLERMIVDKIQIQMAEKMGIQVDDDTLRMAVSQIAQRNNLTPDQFRRSLAREGIDYGDFLDQVRSEIAMGRLRASQINNQIKISDREVEHYLEAQGGSGAVADREYRLGHILIATPREASPDEVKKARERADRVVKELKAGLDFKDASIRYSDDPQALEGGDLGWRKLSEIPSHIAEVVGGMKDGEVSDPIRSPGGYHIVKMLAMRGVGEAKLTKTHVRHILIRPNEVLSDEDAKNKLLALKTRIENGDDFAELARGHSDDKGSAIKGGDLGWVKPGALVPPFEEAMNALDENQLSDPVQTQFGWHLIQVLERQESSDTNEVLKNRARDELFKRKVDEETELWLRKIRDEAYVEIRLDETPASPGEDAPAGEDSPETFMR.

The signal sequence occupies residues 1 to 28; that stretch reads MKISSFRKGRWLGALALFAVVCWSMADA. PpiC domains are found at residues 177-278 and 287-386; these read DREY…KMLA and LTKT…QVLE. Positions 431–454 are disordered; sequence LDETPASPGEDAPAGEDSPETFMR. Acidic residues predominate over residues 443 to 454; the sequence is PAGEDSPETFMR.

The protein resides in the periplasm. It catalyses the reaction [protein]-peptidylproline (omega=180) = [protein]-peptidylproline (omega=0). Its function is as follows. Chaperone involved in the correct folding and assembly of outer membrane proteins. Recognizes specific patterns of aromatic residues and the orientation of their side chains, which are found more frequently in integral outer membrane proteins. May act in both early periplasmic and late outer membrane-associated steps of protein maturation. The polypeptide is Chaperone SurA (Methylococcus capsulatus (strain ATCC 33009 / NCIMB 11132 / Bath)).